A 131-amino-acid polypeptide reads, in one-letter code: Large ribosomal subunit protein bL17 (131 aa).

This sequence belongs to the bacterial ribosomal protein bL17 family. As to quaternary structure, part of the 50S ribosomal subunit. Contacts protein L32.

This chain is Large ribosomal subunit protein bL17, found in Bordetella avium (strain 197N).